Consider the following 786-residue polypeptide: LPS-assembly protein LptD (786 aa).

An N-terminal signal peptide occupies residues 1 to 39; sequence MPPKPLFPNVFPGDGAPRKRRLALALLAVPGLVPAVSYA.

This sequence belongs to the LptD family. As to quaternary structure, component of the lipopolysaccharide transport and assembly complex. Interacts with LptE and LptA.

It localises to the cell outer membrane. Its function is as follows. Together with LptE, is involved in the assembly of lipopolysaccharide (LPS) at the surface of the outer membrane. The protein is LPS-assembly protein LptD of Burkholderia ambifaria (strain ATCC BAA-244 / DSM 16087 / CCUG 44356 / LMG 19182 / AMMD) (Burkholderia cepacia (strain AMMD)).